The sequence spans 338 residues: Anthranilate phosphoribosyltransferase (338 aa).

5-phospho-alpha-D-ribose 1-diphosphate is bound by residues glycine 81, 84 to 85, threonine 89, 91 to 94, 109 to 117, and alanine 121; these read GD, NIST, and KHGNRNLSS. Glycine 81 lines the anthranilate pocket. Mg(2+) is bound at residue serine 93. Asparagine 112 contributes to the anthranilate binding site. Position 167 (arginine 167) interacts with anthranilate. Mg(2+) contacts are provided by aspartate 226 and glutamate 227.

This sequence belongs to the anthranilate phosphoribosyltransferase family. In terms of assembly, homodimer. The cofactor is Mg(2+).

The enzyme catalyses N-(5-phospho-beta-D-ribosyl)anthranilate + diphosphate = 5-phospho-alpha-D-ribose 1-diphosphate + anthranilate. The protein operates within amino-acid biosynthesis; L-tryptophan biosynthesis; L-tryptophan from chorismate: step 2/5. In terms of biological role, catalyzes the transfer of the phosphoribosyl group of 5-phosphorylribose-1-pyrophosphate (PRPP) to anthranilate to yield N-(5'-phosphoribosyl)-anthranilate (PRA). This Cereibacter sphaeroides (strain ATCC 17029 / ATH 2.4.9) (Rhodobacter sphaeroides) protein is Anthranilate phosphoribosyltransferase.